Consider the following 805-residue polypeptide: Sucrose synthase (805 aa).

The GT-B glycosyltransferase stretch occupies residues 275-752 (MVFNVVILSP…GLKRIQEKYT (478 aa)).

It belongs to the glycosyltransferase 1 family. Plant sucrose synthase subfamily.

The catalysed reaction is an NDP-alpha-D-glucose + D-fructose = a ribonucleoside 5'-diphosphate + sucrose + H(+). Functionally, sucrose-cleaving enzyme that provides UDP-glucose and fructose for various metabolic pathways. This Solanum tuberosum (Potato) protein is Sucrose synthase.